The primary structure comprises 614 residues: MEVKEQLKLKELLFIMKQMPKTFKLIFTLERSLFLKLIRFSIITGILPIVSLYISQELINSLVTIRKEVSIVITIFLTYLGVSFFSELISQISEFYNGKFQLNIGYKLNYKVMKKSSNLALKDFENPEIYDKLERVTKEISYKPYQIIQAIITMTTSFVTLLSSIAFLMSWNPKVSLLLLVIPVISLFYFLKIGQEEFFIHWKRAGKERKSWYISYILTHDFSFKELKLYNLKDYLLNKYWDIKKSFIEQDTKILRKKTLLNLIYEIAVQLVGAVIIFIAIMSAFAGKIMVGNVMSYIRSVSLVQNHSQSIMTSIYSIYNSNLYMNQLYEFLELKEEKSQGHKKPIVEPIHSVVFQNVSFIYPNQGEQTLKHINVSLHKGERVAIVGPNGSGKKTFIKLLTGLYEVHEGDILINGINIKELDMDSYMNQIAALFQDFMKYEMTLKENIGFGQIDKLHQTNKMHEVLDIVRADFLKSHSSYQFDTQLGLWFDEGRQLSGGQWQKIALARAYFREASLYILDEPSSALDPIAEKETFDTFFSLSKDKIGIFISHRLVAAKLADRIIVMDKGEIVGIGTHEELLKTCPLYKKMDESENYMNPLEEEGSKWKEALYQG.

The next 5 membrane-spanning stretches (helical) occupy residues 34-54 (FLKL…SLYI), 69-89 (VSIV…SELI), 147-167 (IIQA…SIAF), 175-195 (VSLL…KIGQ), and 267-287 (IAVQ…AFAG). The region spanning 34 to 320 (FLKLIRFSII…IMTSIYSIYN (287 aa)) is the ABC transmembrane type-1 domain. In terms of domain architecture, ABC transporter spans 353–593 (VVFQNVSFIY…CPLYKKMDES (241 aa)). 387 to 394 (GPNGSGKK) serves as a coordination point for ATP.

This sequence belongs to the ABC transporter superfamily.

It is found in the cell membrane. Probably implicated in the export process of the lantibiotic subtilin. This chain is Subtilin transport ATP-binding protein SpaT (spaT), found in Bacillus subtilis.